Consider the following 370-residue polypeptide: tRNA-specific 2-thiouridylase MnmA (370 aa).

Residues 24 to 31 and leucine 50 each bind ATP; that span reads AMSGGVDS. Cysteine 118 (nucleophile) is an active-site residue. Cysteine 118 and cysteine 214 are disulfide-bonded. Glycine 142 provides a ligand contact to ATP. An interaction with tRNA region spans residues 164–166; that stretch reads KDQ. The active-site Cysteine persulfide intermediate is cysteine 214.

The protein belongs to the MnmA/TRMU family.

It is found in the cytoplasm. The enzyme catalyses S-sulfanyl-L-cysteinyl-[protein] + uridine(34) in tRNA + AH2 + ATP = 2-thiouridine(34) in tRNA + L-cysteinyl-[protein] + A + AMP + diphosphate + H(+). Its function is as follows. Catalyzes the 2-thiolation of uridine at the wobble position (U34) of tRNA, leading to the formation of s(2)U34. This Ehrlichia ruminantium (strain Welgevonden) protein is tRNA-specific 2-thiouridylase MnmA.